Reading from the N-terminus, the 406-residue chain is Arginine deiminase (406 aa).

Residue cysteine 396 is the Amidino-cysteine intermediate of the active site.

It belongs to the arginine deiminase family.

It localises to the cytoplasm. It catalyses the reaction L-arginine + H2O = L-citrulline + NH4(+). Its pathway is amino-acid degradation; L-arginine degradation via ADI pathway; carbamoyl phosphate from L-arginine: step 1/2. The protein is Arginine deiminase of Vibrio vulnificus (strain YJ016).